Consider the following 84-residue polypeptide: Turripeptide IX-01 (84 aa).

An N-terminal signal peptide occupies residues 1–21 (MGFYMLLTVALLLTSFMSVEA). Positions 22-39 (TPVDQAERSAMKESGLAH) are excised as a propeptide. Cystine bridges form between Cys48–Cys70, Cys55–Cys74, and Cys60–Cys81.

As to expression, expressed by the venom duct.

It localises to the secreted. This is Turripeptide IX-01 from Gemmula speciosa (Splendid gem-turris).